We begin with the raw amino-acid sequence, 332 residues long: Ribosomal RNA small subunit methyltransferase C (332 aa).

This sequence belongs to the methyltransferase superfamily. RsmC family. Monomer.

Its subcellular location is the cytoplasm. It carries out the reaction guanosine(1207) in 16S rRNA + S-adenosyl-L-methionine = N(2)-methylguanosine(1207) in 16S rRNA + S-adenosyl-L-homocysteine + H(+). In terms of biological role, specifically methylates the guanine in position 1207 of 16S rRNA in the 30S particle. The chain is Ribosomal RNA small subunit methyltransferase C from Pseudomonas putida (strain ATCC 700007 / DSM 6899 / JCM 31910 / BCRC 17059 / LMG 24140 / F1).